Consider the following 500-residue polypeptide: MKAFKQKQVWFITGSQDLYGPKVLEQVAKNSEQIVYGFNESSAISIEVVYKPTVKSPREIHAVCQAANSDENCVGVILWMHTFSPAKMWIAGLNELSKPFMHLHTQFNAELPWSEINMNYMNTHQSAHGCREFGFIGTRMRKERKVVVGHWQSSDVQAQIDDWCRAAAGWHESQNLRIARFGDNMRQVAVTEGDKVAAQIQFGYEVHAYSLGELNEAIAAIAEGDVTAQLDRYASEYQVGNELFGDEYQLDRLRKEAKIELGLTQFLTQGGFGAFTNCFENLTGMTGLPGLATQRLMANGFGYGGEGDWKTAAMVRIMKVMGQGRAGGTSFMEDYTYNFGATDQVLGAHMLEVCPSIAAAKPRLEVHRHTIGVRCDVPRLLFTGKAGPAINVSTIDLGNRFRIILNELDTVTPPQDLPNLPVASALWEPRPNLAVAAAAWIHAGGAHHSAYSQAITTDQIVDFAEMAGAELVIIDADTKIREFKNELRQNSVYYGLARGL.

Residues Glu-306, Glu-333, His-349, and His-448 each contribute to the Mn(2+) site.

The protein belongs to the arabinose isomerase family. It depends on Mn(2+) as a cofactor.

The catalysed reaction is beta-L-arabinopyranose = L-ribulose. Its pathway is carbohydrate degradation; L-arabinose degradation via L-ribulose; D-xylulose 5-phosphate from L-arabinose (bacterial route): step 1/3. Functionally, catalyzes the conversion of L-arabinose to L-ribulose. The polypeptide is L-arabinose isomerase (Shewanella sp. (strain MR-4)).